Consider the following 109-residue polypeptide: uncharacterized protein (109 aa).

The segment at 36 to 109 is disordered; sequence NSSNNLNNNN…KKKKKKRRVK (74 aa). Residues 39–88 show a composition bias toward low complexity; that stretch reads NNLNNNNFNENNLKNNNNRNGNNNNNNNNNNNNNNNNNNNNNNNNNNNNN. A compositionally biased stretch (basic residues) spans 99–109; the sequence is QKKKKKKRRVK.

This is an uncharacterized protein from Dictyostelium discoideum (Social amoeba).